The chain runs to 459 residues: Chaperone SurA (459 aa).

The first 23 residues, 1 to 23, serve as a signal peptide directing secretion; that stretch reads MNHRLVALSVASLALLAPLTVPA. 2 PpiC domains span residues 197–301 and 312–411; these read VQQI…KVLE and VTQS…QLME.

The protein localises to the periplasm. It catalyses the reaction [protein]-peptidylproline (omega=180) = [protein]-peptidylproline (omega=0). Functionally, chaperone involved in the correct folding and assembly of outer membrane proteins. Recognizes specific patterns of aromatic residues and the orientation of their side chains, which are found more frequently in integral outer membrane proteins. May act in both early periplasmic and late outer membrane-associated steps of protein maturation. The protein is Chaperone SurA of Albidiferax ferrireducens (strain ATCC BAA-621 / DSM 15236 / T118) (Rhodoferax ferrireducens).